Reading from the N-terminus, the 321-residue chain is Ribonuclease Z (321 aa).

Zn(2+) contacts are provided by His-62, His-64, Asp-66, His-67, His-139, Asp-209, and His-268. Catalysis depends on Asp-66, which acts as the Proton acceptor.

Belongs to the RNase Z family. In terms of assembly, homodimer. Requires Zn(2+) as cofactor.

It catalyses the reaction Endonucleolytic cleavage of RNA, removing extra 3' nucleotides from tRNA precursor, generating 3' termini of tRNAs. A 3'-hydroxy group is left at the tRNA terminus and a 5'-phosphoryl group is left at the trailer molecule.. Zinc phosphodiesterase, which displays some tRNA 3'-processing endonuclease activity. Probably involved in tRNA maturation, by removing a 3'-trailer from precursor tRNA. In Pseudomonas putida (strain W619), this protein is Ribonuclease Z.